Here is a 236-residue protein sequence, read N- to C-terminus: Small ribosomal subunit protein uS2c (236 aa).

Belongs to the universal ribosomal protein uS2 family.

The protein localises to the plastid. It is found in the chloroplast. The chain is Small ribosomal subunit protein uS2c (rps2) from Phalaenopsis aphrodite subsp. formosana (Moth orchid).